The following is a 218-amino-acid chain: Large ribosomal subunit protein uL3 (218 aa).

This sequence belongs to the universal ribosomal protein uL3 family. As to quaternary structure, part of the 50S ribosomal subunit. Forms a cluster with proteins L14 and L19.

Functionally, one of the primary rRNA binding proteins, it binds directly near the 3'-end of the 23S rRNA, where it nucleates assembly of the 50S subunit. This Syntrophus aciditrophicus (strain SB) protein is Large ribosomal subunit protein uL3.